A 422-amino-acid chain; its full sequence is Mitogen-activated protein kinase spm1 (422 aa).

Positions 21–314 (FKVVKELGQG…VDDALEHPYL (294 aa)) constitute a Protein kinase domain. ATP contacts are provided by residues 27-35 (LGQGAYGIV) and Lys-52. Catalysis depends on Asp-149, which acts as the Proton acceptor. A Phosphothreonine modification is found at Thr-186. The short motif at 186 to 188 (TEY) is the TXY element. Residue Tyr-188 is modified to Phosphotyrosine. The segment at 359-422 (RRRSHPTNPT…DHKSDDNRHN (64 aa)) is disordered. Positions 364 to 379 (PTNPTVNIPQPAQTVP) are enriched in polar residues. The span at 380 to 397 (SNDNGSFNVSSSSSSQTS) shows a compositional bias: low complexity. Positions 411–422 (AIDHKSDDNRHN) are enriched in basic and acidic residues.

It belongs to the protein kinase superfamily. CMGC Ser/Thr protein kinase family. MAP kinase subfamily. The cofactor is Mg(2+). In terms of processing, dually phosphorylated on Thr-186 and Tyr-188, which activates the enzyme.

The catalysed reaction is L-seryl-[protein] + ATP = O-phospho-L-seryl-[protein] + ADP + H(+). The enzyme catalyses L-threonyl-[protein] + ATP = O-phospho-L-threonyl-[protein] + ADP + H(+). Activated by tyrosine and threonine phosphorylation by skh1/pek1. Regulates cell integrity and functions coordinately with the protein kinase C pathway (pck1 and pck2). Involved the regulation of wall architecture, cell shape, cytokinesis in exponential and stationary phase, and metabolism of ions. This is Mitogen-activated protein kinase spm1 (spm1) from Schizosaccharomyces pombe (strain 972 / ATCC 24843) (Fission yeast).